The primary structure comprises 307 residues: Beta-lactamase (307 aa).

The segment at residues 1–34 is a signal peptide (tat-type signal); that stretch reads MRNRGFGRRELLVAMAMLVSVTGCARHASGARPA. The Acyl-ester intermediate role is filled by Ser84. Substrate is bound at residue Ser142. The active-site Proton acceptor is Glu182. 251–253 contacts substrate; it reads TGT.

Belongs to the class-A beta-lactamase family. Monomer. Exported by the Tat system. The position of the signal peptide cleavage has not been experimentally proven.

The protein resides in the periplasm. The protein localises to the secreted. The enzyme catalyses a beta-lactam + H2O = a substituted beta-amino acid. With respect to regulation, is inhibited by clavulanate. Functionally, extended spectrum beta-lactamase (ESBL) that inactivates beta-lactam antibiotics by hydrolyzing the amide group of the beta-lactam ring. Displays high levels of penicillinase and cephalosporinase activity as well as measurable activity with carbapenems, including imipenem and meropenem. Plays a primary role in the intrinsic resistance of mycobacteria to beta-lactam antibiotics. In Mycobacterium bovis (strain ATCC BAA-935 / AF2122/97), this protein is Beta-lactamase (blaC).